Reading from the N-terminus, the 777-residue chain is Semaphorin-3D (777 aa).

The N-terminal stretch at 1–37 is a signal peptide; that stretch reads MNVTKDENPRSRSQDLHLFHAWMMLIMTVLFLPVTET. In terms of domain architecture, Sema spans 44–531; the sequence is RLKLTYKDLL…SWDGLVQLSL (488 aa). A disulfide bridge links cysteine 117 with cysteine 128. Asparagine 139 carries an N-linked (GlcNAc...) asparagine glycan. 4 disulfides stabilise this stretch: cysteine 146–cysteine 155, cysteine 286–cysteine 398, cysteine 310–cysteine 358, and cysteine 534–cysteine 552. In terms of domain architecture, PSI spans 533 to 585; the sequence is RCDTYGKACADCCLARDPYCAWDGNACSRYAPTSKRRARRQDVKYGDPITQCW. An Ig-like C2-type domain is found at 592–680; sequence SHETADEKVI…TFIHTIVKLT (89 aa). Residues asparagine 607 and asparagine 724 are each glycosylated (N-linked (GlcNAc...) asparagine). Cysteine 665 and cysteine 731 form a disulfide bridge. The segment covering 740–765 has biased composition (basic residues); sequence RRQRNKGSPKWKHMQEMKKKRNRRHH. A disordered region spans residues 740–777; the sequence is RRQRNKGSPKWKHMQEMKKKRNRRHHRDLDELQRSVAT. Residues 766–777 show a composition bias toward basic and acidic residues; it reads RDLDELQRSVAT.

This sequence belongs to the semaphorin family.

The protein resides in the secreted. Induces the collapse and paralysis of neuronal growth cones. Could potentially act as repulsive cues toward specific neuronal populations. Binds to neuropilin. This is Semaphorin-3D (Sema3d) from Mus musculus (Mouse).